The primary structure comprises 377 residues: Histone deacetylase 8 (377 aa).

Residues 14–324 form a histone deacetylase region; sequence LPPVYIYSPE…WTYLTGVILG (311 aa). S39 carries the phosphoserine modification. Substrate is bound at residue D101. The active-site Proton acceptor is H143. G151 lines the substrate pocket. D178, H180, and D267 together coordinate a divalent metal cation. Y306 serves as a coordination point for substrate.

Belongs to the histone deacetylase family. HD type 1 subfamily. In terms of assembly, interacts with CBFA2T3. Interacts with phosphorylated SMG5/EST1B; this interaction protects SMG5 from ubiquitin-mediated degradation. Associates with alpha-SMA (smooth muscle alpha-actin). It depends on a divalent metal cation as a cofactor. In terms of processing, phosphorylated by PKA on serine 39. Phosphorylation reduces deacetylase activity observed preferentially on histones H3 and H4.

Its subcellular location is the nucleus. The protein localises to the chromosome. The protein resides in the cytoplasm. It carries out the reaction N(6)-acetyl-L-lysyl-[histone] + H2O = L-lysyl-[histone] + acetate. The catalysed reaction is N(6)-acetyl-L-lysyl-[protein] + H2O = L-lysyl-[protein] + acetate. It catalyses the reaction N(6)-(2E)-butenoyl-L-lysyl-[protein] + H2O = (2E)-2-butenoate + L-lysyl-[protein]. Its activity is regulated as follows. Its activity is inhibited by trichostatin A (TSA) and butyrate, 2 well known histone deacetylase inhibitors. Histone deacetylase that catalyzes the deacetylation of lysine residues on the N-terminal part of the core histones (H2A, H2B, H3 and H4). Histone deacetylation gives a tag for epigenetic repression and plays an important role in transcriptional regulation, cell cycle progression and developmental events. Histone deacetylases act via the formation of large multiprotein complexes. Also involved in the deacetylation of cohesin complex protein SMC3 regulating release of cohesin complexes from chromatin. May play a role in smooth muscle cell contractility. In addition to protein deacetylase activity, also has protein-lysine deacylase activity: acts as a protein decrotonylase by mediating decrotonylation ((2E)-butenoyl) of histones. In Bos taurus (Bovine), this protein is Histone deacetylase 8 (HDAC8).